A 213-amino-acid chain; its full sequence is Ribosomal RNA small subunit methyltransferase G (213 aa).

Residues glycine 75, phenylalanine 80, 128–129 (IE), and arginine 144 each bind S-adenosyl-L-methionine.

Belongs to the methyltransferase superfamily. RNA methyltransferase RsmG family.

It is found in the cytoplasm. The catalysed reaction is guanosine(527) in 16S rRNA + S-adenosyl-L-methionine = N(7)-methylguanosine(527) in 16S rRNA + S-adenosyl-L-homocysteine. Its function is as follows. Specifically methylates the N7 position of guanine in position 527 of 16S rRNA. The protein is Ribosomal RNA small subunit methyltransferase G of Brucella abortus (strain S19).